Reading from the N-terminus, the 210-residue chain is Urease accessory protein UreF (210 aa).

Belongs to the UreF family. As to quaternary structure, ureD, UreF and UreG form a complex that acts as a GTP-hydrolysis-dependent molecular chaperone, activating the urease apoprotein by helping to assemble the nickel containing metallocenter of UreC. The UreE protein probably delivers the nickel.

It is found in the cytoplasm. In terms of biological role, required for maturation of urease via the functional incorporation of the urease nickel metallocenter. In Cereibacter sphaeroides (strain ATCC 17025 / ATH 2.4.3) (Rhodobacter sphaeroides), this protein is Urease accessory protein UreF.